A 255-amino-acid polypeptide reads, in one-letter code: Pyridoxine 5'-phosphate synthase (255 aa).

Asn12 contributes to the 3-amino-2-oxopropyl phosphate binding site. 14–15 contacts 1-deoxy-D-xylulose 5-phosphate; it reads DH. 3-amino-2-oxopropyl phosphate is bound at residue Arg23. His48 acts as the Proton acceptor in catalysis. Residues Arg50 and His55 each coordinate 1-deoxy-D-xylulose 5-phosphate. Catalysis depends on Glu75, which acts as the Proton acceptor. Position 105 (Thr105) interacts with 1-deoxy-D-xylulose 5-phosphate. Catalysis depends on His199, which acts as the Proton donor. Residues Gly200 and 221 to 222 contribute to the 3-amino-2-oxopropyl phosphate site; that span reads GF.

It belongs to the PNP synthase family. In terms of assembly, homooctamer; tetramer of dimers.

The protein localises to the cytoplasm. It catalyses the reaction 3-amino-2-oxopropyl phosphate + 1-deoxy-D-xylulose 5-phosphate = pyridoxine 5'-phosphate + phosphate + 2 H2O + H(+). It participates in cofactor biosynthesis; pyridoxine 5'-phosphate biosynthesis; pyridoxine 5'-phosphate from D-erythrose 4-phosphate: step 5/5. Catalyzes the complicated ring closure reaction between the two acyclic compounds 1-deoxy-D-xylulose-5-phosphate (DXP) and 3-amino-2-oxopropyl phosphate (1-amino-acetone-3-phosphate or AAP) to form pyridoxine 5'-phosphate (PNP) and inorganic phosphate. The polypeptide is Pyridoxine 5'-phosphate synthase (Rhodopseudomonas palustris (strain BisB18)).